A 71-amino-acid polypeptide reads, in one-letter code: uncharacterized protein (71 aa).

A helical membrane pass occupies residues F24–L44.

Its subcellular location is the membrane. This is an uncharacterized protein from Schizosaccharomyces pombe (strain 972 / ATCC 24843) (Fission yeast).